We begin with the raw amino-acid sequence, 184 residues long: ATP synthase subunit b, chloroplastic (184 aa).

A helical membrane pass occupies residues leucine 27 to leucine 49.

It belongs to the ATPase B chain family. In terms of assembly, F-type ATPases have 2 components, F(1) - the catalytic core - and F(0) - the membrane proton channel. F(1) has five subunits: alpha(3), beta(3), gamma(1), delta(1), epsilon(1). F(0) has four main subunits: a(1), b(1), b'(1) and c(10-14). The alpha and beta chains form an alternating ring which encloses part of the gamma chain. F(1) is attached to F(0) by a central stalk formed by the gamma and epsilon chains, while a peripheral stalk is formed by the delta, b and b' chains.

Its subcellular location is the plastid. The protein localises to the chloroplast thylakoid membrane. In terms of biological role, f(1)F(0) ATP synthase produces ATP from ADP in the presence of a proton or sodium gradient. F-type ATPases consist of two structural domains, F(1) containing the extramembraneous catalytic core and F(0) containing the membrane proton channel, linked together by a central stalk and a peripheral stalk. During catalysis, ATP synthesis in the catalytic domain of F(1) is coupled via a rotary mechanism of the central stalk subunits to proton translocation. Component of the F(0) channel, it forms part of the peripheral stalk, linking F(1) to F(0). The sequence is that of ATP synthase subunit b, chloroplastic from Cucumis sativus (Cucumber).